A 617-amino-acid chain; its full sequence is Chitin elicitor receptor kinase 1 (617 aa).

The first 23 residues, 1–23 (MKLKISLIAPILLLFSFFFAVES), serve as a signal peptide directing secretion. Residues 24-232 (KCRTSCPLAL…KSSKQDGVGA (209 aa)) lie on the Extracellular side of the membrane. 3 disulfides stabilise this stretch: C25-C93, C29-C155, and C91-C153. N40, N52, and N102 each carry an N-linked (GlcNAc...) asparagine glycan. The LysM 1; degenerate domain maps to 46-74 (VINQNLNSSIAPYDQINFDPILRYNSNIK). One can recognise a LysM 2; degenerate domain in the interval 108–140 (RQEDTYERVAISNYANLTTMESLQARNPFPATN). 109–115 (QEDTYER) contributes to the chitin binding site. N-linked (GlcNAc...) asparagine glycosylation occurs at N123. Residue 137 to 143 (PATNIPL) coordinates chitin. The N-linked (GlcNAc...) asparagine glycan is linked to N152. Residues 168–211 (VTYPLRPEDSLSSIARSSGVSADILQRYNPGVNFNSGNGIVYVP) enclose the LysM 3 domain. A helical membrane pass occupies residues 233–253 (GVIAGIVIGVIVALLLILFIV). The Cytoplasmic portion of the chain corresponds to 254 to 617 (YYAYRKNKSK…EDLVSLMSGR (364 aa)). 3 positions are modified to phosphoserine: S266, S268, and S274. Positions 322-594 (FNLSFKIGQG…YIVVALSTLF (273 aa)) constitute a Protein kinase domain. ATP-binding positions include 328-336 (IGQGGFGAV) and K349. Y390 bears the Phosphotyrosine mark. The Proton acceptor role is filled by D441. Residues T479 and T519 each carry the phosphothreonine modification.

This sequence belongs to the protein kinase superfamily. Ser/Thr protein kinase family. In terms of assembly, forms homodimers and homooligomers. Homodimerization is required to trigger plant defenses. Binds to chitin, chitosan and chito-oligomer oligosaccharide elicitors. Interaction with chitin octamer (NAG(8)) promotes homodimerization while shorter chitin oligomers inhibit homodimerization. Interacts with Pseudomonas syringae hopAB2/avrPtoB. Interacts (preferentially when unphosphorylated) with PBL27 at the plasma membrane. Binds to IOS1. Post-translationally, autophosphorylated. Autophosphorylation is induced by chitin and derivatives. Ubiquitinated and targeted to the proteasome by hopAB2/avrPtoB of Pseudomonas syringae pv. tomato DC3000. In terms of tissue distribution, expressed ubiquitously, with lowest expression in pollen.

It localises to the cell membrane. It catalyses the reaction L-seryl-[protein] + ATP = O-phospho-L-seryl-[protein] + ADP + H(+). The catalysed reaction is L-threonyl-[protein] + ATP = O-phospho-L-threonyl-[protein] + ADP + H(+). With respect to regulation, activated by chitin-mediated homodimerization. Functionally, lysin motif (LysM) receptor kinase that functions as a cell surface receptor in chitin elicitor (chitooligosaccharides) signaling leading to innate immunity toward both biotic and abiotic stresses (e.g. tolerance to salinity, heavy-metal stresses, and Botrytis cinerea infection). Recognizes microbe-derived N-acetylglucosamine (NAG)-containing ligands. Involved in the resistance to pathogenic fungi Alternaria brassicicola and Erysiphe cichoracearum, probably by sensing microbe-associated molecular patterns (MAMP) and pathogen-associated molecular patterns (PAMP). Plays an essential role in detecting peptidoglycans (e.g. PGNs) and restricting bacterial growth. Target of the bacterial type III effector E3-ligase protein hopAB2/avrPtoB of Pseudomonas syringae pv. tomato DC3000 that mediates ubiquitination and subsequent proteolysis, thus blocking all defense responses by suppressing PAMP-triggered immunity (PTI). Mediates chitin-induced phosphorylation of PBL27. In Arabidopsis thaliana (Mouse-ear cress), this protein is Chitin elicitor receptor kinase 1 (CERK1).